Here is a 227-residue protein sequence, read N- to C-terminus: UPF0758 protein Pcar_0065 (227 aa).

Residues 105-227 form the MPN domain; that stretch reads RYTSPQAVFA…YVSLADRGVL (123 aa). Zn(2+) is bound by residues His176, His178, and Asp189. Residues 176 to 189 carry the JAMM motif motif; the sequence is HNHPSGDPSPSRED.

It belongs to the UPF0758 family.

The sequence is that of UPF0758 protein Pcar_0065 from Syntrophotalea carbinolica (strain DSM 2380 / NBRC 103641 / GraBd1) (Pelobacter carbinolicus).